Here is a 305-residue protein sequence, read N- to C-terminus: tRNA-cytidine(32) 2-sulfurtransferase (305 aa).

The segment at 1 to 20 is disordered; the sequence is MTAVLPLPQPLADPAPRDPR. The short motif at 59–64 is the PP-loop motif element; it reads SGGKDS. [4Fe-4S] cluster contacts are provided by Cys134, Cys137, and Cys225. A disordered region spans residues 282 to 305; the sequence is DAPSGLDPDPRAWLSAGHATHDSD.

This sequence belongs to the TtcA family. Homodimer. Mg(2+) is required as a cofactor. It depends on [4Fe-4S] cluster as a cofactor.

The protein resides in the cytoplasm. The enzyme catalyses cytidine(32) in tRNA + S-sulfanyl-L-cysteinyl-[cysteine desulfurase] + AH2 + ATP = 2-thiocytidine(32) in tRNA + L-cysteinyl-[cysteine desulfurase] + A + AMP + diphosphate + H(+). Its pathway is tRNA modification. Its function is as follows. Catalyzes the ATP-dependent 2-thiolation of cytidine in position 32 of tRNA, to form 2-thiocytidine (s(2)C32). The sulfur atoms are provided by the cysteine/cysteine desulfurase (IscS) system. The protein is tRNA-cytidine(32) 2-sulfurtransferase of Xanthomonas axonopodis pv. citri (strain 306).